A 451-amino-acid polypeptide reads, in one-letter code: Putative metabolite transport protein YyaJ (451 aa).

The Cytoplasmic segment spans residues 1 to 29 (MNTIFKQKNTHPFSNAANRLDRLPISRVH). The helical transmembrane segment at 30-50 (FQVLTALGIVYFFDLADLFTL) threads the bilayer. The Extracellular segment spans residues 51 to 60 (SNVAPALIEH). Residues 61–81 (WGIPLSTIANVTAASFLGMFL) form a helical membrane-spanning segment. At 82–97 (GASLGGRLSDRIGRKK) the chain is on the cytoplasmic side. A helical transmembrane segment spans residues 98–118 (ALNLFVFVFSIASLCNAAAWD). The Extracellular portion of the chain corresponds to 119–124 (IPSLMT). Residues 125-145 (FRFLTGFGVAAAMVITNSYLA) form a helical membrane-spanning segment. At 146 to 157 (EFFPSSVRGKYI) the chain is on the cytoplasmic side. A helical membrane pass occupies residues 158-178 (SFCAMIGLIGVPITNIVSAFV). Residues 179–182 (IPLG) are Extracellular-facing. Residues 183-203 (SWGWRLVFVWGAVGLIYFFFI) traverse the membrane as a helical segment. The Cytoplasmic segment spans residues 204 to 270 (HRLEESPRWH…LLKGRNLKIT (67 aa)). A helical membrane pass occupies residues 271–291 (IVLSAVWIFETFGFYGFASWV). Topologically, residues 292–305 (PSLLKSNGVTMENT) are extracellular. A helical transmembrane segment spans residues 306–326 (LWYNVLHSVGAPLGALLGSMI). Residues 327–333 (SERFQRK) lie on the Cytoplasmic side of the membrane. Residues 334–354 (WILAASAFLTAIAGLLYGMTF) form a helical membrane-spanning segment. Residues 355-357 (IPI) are Extracellular-facing. The chain crosses the membrane as a helical span at residues 358–378 (MIIVFGFIVNITERVFTSNLY). Topologically, residues 379 to 396 (AYTSEPYPTEYRSSGSGL) are cytoplasmic. Residues 397-417 (AYGLGRFSNIFGSLLVGFIAV) form a helical membrane-spanning segment. Residues 418–421 (QLGY) are Extracellular-facing. A helical membrane pass occupies residues 422-442 (ISVFLFIGGCWLACSLLLIFF). Residues 443-451 (GPNTNAKQI) are Cytoplasmic-facing.

The protein belongs to the major facilitator superfamily. Sugar transporter (TC 2.A.1.1) family.

The protein localises to the cell membrane. The chain is Putative metabolite transport protein YyaJ (yyaJ) from Bacillus subtilis (strain 168).